The sequence spans 565 residues: Sulfite reductase [NADPH] hemoprotein beta-component (565 aa).

The [4Fe-4S] cluster site is built by Cys429, Cys435, Cys474, and Cys478. Cys478 contacts siroheme.

This sequence belongs to the nitrite and sulfite reductase 4Fe-4S domain family. As to quaternary structure, alpha(8)-beta(8). The alpha component is a flavoprotein, the beta component is a hemoprotein. The cofactor is siroheme. [4Fe-4S] cluster is required as a cofactor.

It carries out the reaction hydrogen sulfide + 3 NADP(+) + 3 H2O = sulfite + 3 NADPH + 4 H(+). It participates in sulfur metabolism; hydrogen sulfide biosynthesis; hydrogen sulfide from sulfite (NADPH route): step 1/1. Functionally, component of the sulfite reductase complex that catalyzes the 6-electron reduction of sulfite to sulfide. This is one of several activities required for the biosynthesis of L-cysteine from sulfate. This is Sulfite reductase [NADPH] hemoprotein beta-component from Shewanella pealeana (strain ATCC 700345 / ANG-SQ1).